The chain runs to 66 residues: Beta-mammal toxin Cv2 (66 aa).

An LCN-type CS-alpha/beta domain is found at 1–66 (KEGYIVNHST…VWPLPKKTCN (66 aa)). 4 disulfides stabilise this stretch: Cys-12-Cys-65, Cys-16-Cys-41, Cys-25-Cys-46, and Cys-29-Cys-48.

As to expression, expressed by the venom gland.

The protein resides in the secreted. Is susceptible to be slightly neutralized by human antibodies scFvs 10FG2. In terms of biological role, beta toxins bind voltage-independently at site-4 of sodium channels (Nav) and reduces peak current and shifts the voltage of activation toward more negative potentials thereby affecting sodium channel activation and promoting spontaneous and repetitive firing. This toxin is slightly toxic to mice. The protein is Beta-mammal toxin Cv2 of Centruroides villegasi (Scorpion).